Consider the following 152-residue polypeptide: uncharacterized protein (152 aa).

An HTH marR-type domain is found at 3–143 (EQKLCQAINL…IIEIFTILKS (141 aa)). A DNA-binding region (H-T-H motif) is located at residues 55–78 (PGSLAMYQNVHKSAISNRLKKLLE).

This is an uncharacterized protein from Bacillus subtilis (strain 168).